Reading from the N-terminus, the 105-residue chain is MINWSGKYISPYAEHGKKSKQVKKITVSIPIKVLEILTNERTRRQINNLRHATNSELLCEAFLHAFTGQPLPADEDLMKERYDEIPEKAKSRMRDLGIDPDEWQY.

It belongs to the MetJ family. Homodimer.

The protein resides in the cytoplasm. Functionally, this regulatory protein, when combined with SAM (S-adenosylmethionine) represses the expression of the methionine regulon and of enzymes involved in SAM synthesis. The protein is Met repressor of Haemophilus ducreyi (strain 35000HP / ATCC 700724).